A 362-amino-acid polypeptide reads, in one-letter code: MRRPSLLLKDILKCTLLVFGVWILYILKLNYTTEECDMKKMHYVDPDRVKRAQTYAQQVLQKECRPKFAKTSMALLFEHRYSVDLLPFVQKAPKDSEAESKYDPPFGFRKFSSKVQTLLELLPEHDLPEHLKAKTCRRCVVIGSGGILHGLELGHTLNQFDVVIRLNSAPVEGYSEHVGNKTTIRMTYPEGAPLSDLEYYSNDLFVAVLFKSVDFNWLQAMVKNETLPFWVRLFFWKQVAEKIPLQPKHFRILNPVIIKETAFDILQYSEPQSRFWGRDKNVPTIGVIAVVLATHLCDEVSLAGFGYDLSQPRTPLHYFDNQCMAAMNFQTMHNVTTETKFLLKLVKEGVVKDLSGGIDREF.

Over 1–5 (MRRPS) the chain is Cytoplasmic. Residues 6–26 (LLLKDILKCTLLVFGVWILYI) traverse the membrane as a helical; Signal-anchor for type II membrane protein segment. Topologically, residues 27 to 362 (LKLNYTTEEC…DLSGGIDREF (336 aa)) are lumenal. N-linked (GlcNAc...) asparagine glycans are attached at residues N30, N180, N224, and N334. C139 and C297 are oxidised to a cystine.

It belongs to the glycosyltransferase 29 family.

It is found in the golgi apparatus membrane. It carries out the reaction a beta-D-Gal-(1-&gt;4)-beta-D-Glc-(1&lt;-&gt;1)-Cer(d18:1(4E)) + CMP-N-acetyl-beta-neuraminate = a ganglioside GM3 (d18:1(4E)) + CMP + H(+). It catalyses the reaction ganglioside GA2 (d18:1(4E)/18:0) + CMP-N-acetyl-beta-neuraminate = ganglioside GM2 (d18:1(4E)/18:0) + CMP + H(+). The enzyme catalyses a beta-D-Gal-(1&lt;-&gt;1')-ceramide + CMP-N-acetyl-beta-neuraminate = N-acetyl-alpha-neuraminosyl-(2-&gt;3)-beta-D-galactosyl-(1&lt;-&gt;1')-ceramide + CMP + H(+). The catalysed reaction is ganglioside GA1 (d18:1(4E)/18:0) + CMP-N-acetyl-beta-neuraminate = ganglioside GM1 (d18:1(4E)/18:0) + CMP + H(+). Its function is as follows. Transfers the sialyl group (N-acetyl-alpha-neuraminyl or NeuAc) from CMP-NeuAc to the non-reducing terminal galactose (Gal) of glycosphingolipids forming gangliosides (important molecules involved in the regulation of multiple cellular processes, including cell proliferation and differentiation, apoptosis, embryogenesis, development, and oncogenesis). Mainly involved in the biosynthesis of ganglioside GM3 but can also use different glycolipids as substrate acceptors such as D-galactosylceramide (GalCer), asialo-GM2 (GA2) and asialo-GM1 (GA1), although less preferentially than beta-D-Gal-(1-&gt;4)-beta-D-Glc-(1&lt;-&gt;1)-Cer (LacCer). In Pan troglodytes (Chimpanzee), this protein is Lactosylceramide alpha-2,3-sialyltransferase (ST3GAL5).